Reading from the N-terminus, the 193-residue chain is Anthranilate synthase component 2 (193 aa).

Residues 3–193 (DILLLDNVDS…EQTLAWALAK (191 aa)) form the Glutamine amidotransferase type-1 domain. 57–59 (GPG) is a binding site for L-glutamine. Catalysis depends on Cys84, which acts as the Nucleophile; for GATase activity. L-glutamine is bound by residues Gln88 and 134-135 (SL). Active-site for GATase activity residues include His170 and Glu172.

As to quaternary structure, heterotetramer consisting of two non-identical subunits: a beta subunit (TrpG) and a large alpha subunit (TrpE).

The catalysed reaction is chorismate + L-glutamine = anthranilate + pyruvate + L-glutamate + H(+). Its pathway is amino-acid biosynthesis; L-tryptophan biosynthesis; L-tryptophan from chorismate: step 1/5. Its function is as follows. Part of a heterotetrameric complex that catalyzes the two-step biosynthesis of anthranilate, an intermediate in the biosynthesis of L-tryptophan. In the first step, the glutamine-binding beta subunit (TrpG) of anthranilate synthase (AS) provides the glutamine amidotransferase activity which generates ammonia as a substrate that, along with chorismate, is used in the second step, catalyzed by the large alpha subunit of AS (TrpE) to produce anthranilate. In the absence of TrpG, TrpE can synthesize anthranilate directly from chorismate and high concentrations of ammonia. The protein is Anthranilate synthase component 2 (trpG) of Serratia marcescens.